The sequence spans 155 residues: SsrA-binding protein (155 aa).

A disordered region spans residues 135 to 155 (KRESLKRRQDQRDIQRAMKNY).

It belongs to the SmpB family.

Its subcellular location is the cytoplasm. Its function is as follows. Required for rescue of stalled ribosomes mediated by trans-translation. Binds to transfer-messenger RNA (tmRNA), required for stable association of tmRNA with ribosomes. tmRNA and SmpB together mimic tRNA shape, replacing the anticodon stem-loop with SmpB. tmRNA is encoded by the ssrA gene; the 2 termini fold to resemble tRNA(Ala) and it encodes a 'tag peptide', a short internal open reading frame. During trans-translation Ala-aminoacylated tmRNA acts like a tRNA, entering the A-site of stalled ribosomes, displacing the stalled mRNA. The ribosome then switches to translate the ORF on the tmRNA; the nascent peptide is terminated with the 'tag peptide' encoded by the tmRNA and targeted for degradation. The ribosome is freed to recommence translation, which seems to be the essential function of trans-translation. This chain is SsrA-binding protein, found in Trichormus variabilis (strain ATCC 29413 / PCC 7937) (Anabaena variabilis).